A 335-amino-acid chain; its full sequence is NADP(+)-dependent glycerol-3-phosphate dehydrogenase (335 aa).

Residue glycine 137 participates in sn-glycerol 3-phosphate binding. Residue alanine 141 coordinates NADPH. Positions 192, 250, 259, and 260 each coordinate sn-glycerol 3-phosphate. The active-site Proton acceptor is lysine 192. Residue arginine 259 participates in NADPH binding. Residues valine 287 and glutamate 289 each contribute to the NADPH site.

The protein belongs to the NAD-dependent glycerol-3-phosphate dehydrogenase family. In terms of assembly, homodimer.

The protein localises to the cytoplasm. It catalyses the reaction sn-glycerol 3-phosphate + NADP(+) = dihydroxyacetone phosphate + NADPH + H(+). Its function is as follows. Catalyzes the reduction of the glycolytic intermediate dihydroxyacetone phosphate (DHAP) to sn-glycerol 3-phosphate (G3P). Shows a 15-fold preference for NADPH over NADH in the reduction process. Can also catalyze the reverse reaction in vitro. Shows no activity with dihydroxyacetone, glycerol, glycerol-2-phosphate, D-glyceraldehyde-3-phosphate, DL-glyceraldehyde, D-erythrose-4-phosphate, D-fructose-6-phosphate, beta-D-glucose-6-phosphate, or alpha-D-galactose-1-phosphate. The sequence is that of NADP(+)-dependent glycerol-3-phosphate dehydrogenase from Archaeoglobus fulgidus (strain ATCC 49558 / DSM 4304 / JCM 9628 / NBRC 100126 / VC-16).